Here is a 303-residue protein sequence, read N- to C-terminus: DCN1-like protein 3 (303 aa).

The tract at residues 1 to 40 (MGQCVTKCKNPSSTLGSKNGERESSKPHKRSSSHKEEHMS) is disordered. Gly-2 carries the N-myristoyl glycine lipid modification. One can recognise a DCUN1 domain in the interval 85 to 277 (SSLQRIEELF…LFDTFVEWEM (193 aa)).

May interact (via the DCUN1 domain) with unneddylated cullins.

It is found in the cell membrane. The protein resides in the cytoplasm. It localises to the nucleus. The protein localises to the perinuclear region. In terms of biological role, contributes to the neddylation of all cullins by transferring NEDD8 from N-terminally acetylated NEDD8-conjugating E2s enzyme to different cullin C-terminal domain-RBX complexes. At the cell membrane, can promote and as well inhibit cullins neddylation. This Xenopus laevis (African clawed frog) protein is DCN1-like protein 3.